The chain runs to 149 residues: Large ribosomal subunit protein uL16 (149 aa).

It belongs to the universal ribosomal protein uL16 family. In terms of assembly, part of the 50S ribosomal subunit.

In terms of biological role, binds 23S rRNA and is also seen to make contacts with the A and possibly P site tRNAs. The protein is Large ribosomal subunit protein uL16 of Dehalococcoides mccartyi (strain ATCC BAA-2100 / JCM 16839 / KCTC 5957 / BAV1).